A 154-amino-acid chain; its full sequence is uncharacterized protein (154 aa).

The interval 91 to 154 is disordered; sequence PSEESWGCRQ…WGSPQPSRGA (64 aa). Residues 134–154 show a composition bias toward polar residues; the sequence is SRDTSPLGGQSWGSPQPSRGA.

This is an uncharacterized protein from Homo sapiens (Human).